Here is a 200-residue protein sequence, read N- to C-terminus: Probable molybdenum cofactor guanylyltransferase (200 aa).

Residues 9-11, Lys-21, Asp-69, and Asp-100 each bind GTP; that span reads LAG. Residue Asp-100 coordinates Mg(2+).

It belongs to the MobA family. It depends on Mg(2+) as a cofactor.

Its subcellular location is the cytoplasm. It catalyses the reaction Mo-molybdopterin + GTP + H(+) = Mo-molybdopterin guanine dinucleotide + diphosphate. Functionally, transfers a GMP moiety from GTP to Mo-molybdopterin (Mo-MPT) cofactor (Moco or molybdenum cofactor) to form Mo-molybdopterin guanine dinucleotide (Mo-MGD) cofactor. This chain is Probable molybdenum cofactor guanylyltransferase, found in Bacillus cereus (strain AH187).